The primary structure comprises 449 residues: Ras-related GTP-binding protein D (449 aa).

The segment at 1–55 is disordered; it reads MSQVLGKPQPQGEDGGEDQEEDELVGLAGYEDGPESSDAELDSGPEEGESRRNSW. 2 stretches are compositionally biased toward acidic residues: residues 14–24 and 32–47; these read DGGEDQEEDEL and DGPESSDAELDSGPEE. GTP is bound by residues Arg-120, Arg-121, Ser-122, Gly-123, Lys-124, Ser-125, Ser-126, and Thr-140. Arg-121, Ser-122, Gly-123, Lys-124, Ser-125, Ser-126, Thr-140, Glu-144, and Thr-146 together coordinate GDP. GTP-binding residues include Thr-146, Gly-169, His-228, Lys-229, and Asp-231. Positions 228, 229, 231, 269, and 270 each coordinate GDP. Ile-270 serves as a coordination point for GTP. A disordered region spans residues 428 to 449; the sequence is KAQSRLPKKTGATPNGTPRVLL.

The protein belongs to the GTR/RAG GTP-binding protein family. As to quaternary structure, forms a heterodimer with RRAGA in a sequence-independent manner and RRAGB. Heterodimerization stabilizes RRAG proteins. The GDP-bound form of RRAGD (in complex with the GTP-bound form of RRAGA or RRAGB), interacts with RPTOR, thereby promoting recruitment of mTORC1 to the lysosomes. Component of the lysosomal folliculin complex (LFC), composed of FLCN, FNIP1 (or FNIP2), RagA/RRAGA or RagB/RRAGB GDP-bound, RagC/RRAGC or RagD/RRAGD GTP-bound, and Ragulator. Interacts with NOL8. Interacts with SH3BP4; the interaction with this negative regulator is most probably direct, preferentially occurs with the inactive GDP-bound form of RRAGD and is negatively regulated by amino acids. The Rag heterodimer interacts with SLC38A9; the probable amino acid sensor. Interacts with SESN1, SESN2 and SESN3. The GDP-bound form interacts with TFEB. The GDP-bound form interacts with TFE3. Expressed in the distal tubule of the kidney.

Its subcellular location is the cytoplasm. It is found in the nucleus. It localises to the lysosome membrane. The catalysed reaction is GTP + H2O = GDP + phosphate + H(+). Its activity is regulated as follows. The activation of RagD/RRAGD is mediated by a GTPase activating protein (GAP). In high-amino acid conditions, activated by GTPase activating protein FLCN that stimulates RRAGD GTPase activity to turn it into its active GDP-bound form. In response to amino acid depletion, the GATOR1 complex inactivates RagC/RRAGC by securing the GTP-bound inactive form. Guanine nucleotide-binding protein that plays a crucial role in the cellular response to amino acid availability through regulation of the mTORC1 signaling cascade. Forms heterodimeric Rag complexes with RagA/RRAGA or RagB/RRAGB and cycles between an inactive GTP-bound and an active GDP-bound form: RagD/RRAGD is in its active form when GDP-bound RagD/RRAGD forms a complex with GTP-bound RagA/RRAGA (or RagB/RRAGB) and in an inactive form when GTP-bound RagD/RRAGD heterodimerizes with GDP-bound RagA/RRAGA (or RagB/RRAGB). In its active form, promotes the recruitment of mTORC1 to the lysosomes and its subsequent activation by the GTPase RHEB. This is a crucial step in the activation of the MTOR signaling cascade by amino acids. Also plays a central role in the non-canonical mTORC1 complex, which acts independently of RHEB and specifically mediates phosphorylation of MiT/TFE factors TFEB and TFE3: GDP-bound RagD/RRAGD mediates recruitment of MiT/TFE factors TFEB and TFE3. This Mus musculus (Mouse) protein is Ras-related GTP-binding protein D.